Here is a 619-residue protein sequence, read N- to C-terminus: UPF0329 protein ECU08_2070 (619 aa).

Basic and acidic residues-rich tracts occupy residues 350–359 (EREKREESKG) and 369–385 (GAGE…RKEE). The interval 350-425 (EREKREESKG…REKKMGEEHH (76 aa)) is disordered. The segment covering 386-396 (EGVEVEEEESA) has biased composition (acidic residues).

The protein belongs to the UPF0329 family.

The protein is UPF0329 protein ECU08_2070 of Encephalitozoon cuniculi (strain GB-M1) (Microsporidian parasite).